A 507-amino-acid chain; its full sequence is Protein zntA (507 aa).

An N-terminal signal peptide occupies residues 1 to 18 (MSIFAYSILAGLAPLLSS). An N-linked (GlcNAc...) asparagine glycan is attached at N31. Residues 35–55 (FHILLCISAGLLFAVASLELI) traverse the membrane as a helical segment. Residues 124–179 (GLNLNNLNQATNLDNNEEDNDNLDNDGENEIENDHDHDHQEDEGGDNDHDHESEEK) are disordered. Residues 125-137 (LNLNNLNQATNLD) show a composition bias toward low complexity. The span at 138-154 (NNEEDNDNLDNDGENEI) shows a compositional bias: acidic residues. Residues 155 to 179 (ENDHDHDHQEDEGGDNDHDHESEEK) show a composition bias toward basic and acidic residues. The helical transmembrane segment at 185 to 205 (IPMYGIGFGFAILIIVESIFS) threads the bilayer. Residues 209–264 (GGGGGGGHHSHSHGSLSSSSSNDVISDYISNNNSNNINNNDDDNNNNNNNNDDDDD) are disordered. Low complexity predominate over residues 221–258 (HGSLSSSSSNDVISDYISNNNSNNINNNDDDNNNNNNN). 5 N-linked (GlcNAc...) asparagine glycosylation sites follow: N240, N298, N328, N342, and N351. Residues 305 to 350 (PNIASPVMNKDNNNNDKDKNRNSNKSDIKNSGSINNGNNSGNNNNN) form a disordered region. The span at 317–332 (NNNDKDKNRNSNKSDI) shows a compositional bias: basic and acidic residues. A compositionally biased stretch (low complexity) spans 333-350 (KNSGSINNGNNSGNNNNN). 5 consecutive transmembrane segments (helical) span residues 355 to 375 (LTIT…VVIS), 388 to 408 (VALA…SLIL), 422 to 442 (FFYF…SSFL), 451 to 471 (GAFV…TAIL), and 486 to 506 (LFSI…FHGA).

Belongs to the ZIP transporter (TC 2.A.5) family.

It localises to the membrane. Functionally, may transport divalent cations. May participate, with dstA, in the regulation of the differentiation of stalk cells during development. The polypeptide is Protein zntA (zntA) (Dictyostelium discoideum (Social amoeba)).